Reading from the N-terminus, the 177-residue chain is Large ribosomal subunit protein uL6 (177 aa).

This sequence belongs to the universal ribosomal protein uL6 family. As to quaternary structure, part of the 50S ribosomal subunit.

Functionally, this protein binds to the 23S rRNA, and is important in its secondary structure. It is located near the subunit interface in the base of the L7/L12 stalk, and near the tRNA binding site of the peptidyltransferase center. In Rhodopseudomonas palustris (strain BisB5), this protein is Large ribosomal subunit protein uL6.